The following is a 300-amino-acid chain: Spermatogenesis-associated serine-rich protein 1 (300 aa).

The segment covering 1 to 10 (MSPSMLTGNS) has biased composition (polar residues). 2 disordered regions span residues 1 to 42 (MSPS…MTEV) and 64 to 91 (TPSGKSVSSSSSVETGPSVSEPPGLPRV). Residues 27-42 (QLEKVPEKRDSGMTEV) are compositionally biased toward basic and acidic residues. Residues 64 to 85 (TPSGKSVSSSSSVETGPSVSEP) show a composition bias toward low complexity. Serine 113 is modified (phosphoserine).

The sequence is that of Spermatogenesis-associated serine-rich protein 1 (SPATS1) from Homo sapiens (Human).